Reading from the N-terminus, the 361-residue chain is POU domain, class 3, transcription factor 4 (361 aa).

Disordered stretches follow at residues 99 to 131 (PHVA…GQPL) and 144 to 192 (MLEH…PTSD). Positions 119-131 (APNSSITSSGQPL) are enriched in polar residues. Basic and acidic residues predominate over residues 165 to 183 (VLREPPDHGELGSHHCQDH). Residues 186-260 (EETPTSDELE…LLNKWLEEAD (75 aa)) enclose the POU-specific domain. Residue serine 265 is modified to Phosphoserine. Residues 278-337 (KRKKRTSIEVSVKGVLETHFLKCPKPAAQEISSLADSLQLEKEVVRVWFCNRRQKEKRMT) constitute a DNA-binding region (homeobox). The disordered stretch occupies residues 334-361 (KRMTPPGDQQPHEVYSHTVKTDASCHDL). Basic and acidic residues predominate over residues 343 to 361 (QPHEVYSHTVKTDASCHDL).

This sequence belongs to the POU transcription factor family. Class-3 subfamily. As to quaternary structure, interacts with HNRNPU. In terms of tissue distribution, brain specific.

The protein resides in the nucleus. In terms of biological role, probable transcription factor which exert its primary action widely during early neural development and in a very limited set of neurons in the mature brain. The sequence is that of POU domain, class 3, transcription factor 4 (Pou3f4) from Mus musculus (Mouse).